The primary structure comprises 489 residues: Probable cytochrome P450 522A1 (489 aa).

A helical transmembrane segment spans residues 1–21; that stretch reads MILTIVIIILTVIFVNKYLLN. Residue C433 participates in heme binding.

The protein belongs to the cytochrome P450 family. Heme is required as a cofactor.

The protein localises to the membrane. This Dictyostelium discoideum (Social amoeba) protein is Probable cytochrome P450 522A1 (cyp522A1).